The primary structure comprises 226 residues: Cytidylate kinase (226 aa).

ATP is bound at residue 12–20; that stretch reads GPSGAGKGT.

It belongs to the cytidylate kinase family. Type 1 subfamily.

The protein localises to the cytoplasm. It catalyses the reaction CMP + ATP = CDP + ADP. It carries out the reaction dCMP + ATP = dCDP + ADP. This is Cytidylate kinase from Vibrio vulnificus (strain YJ016).